A 421-amino-acid chain; its full sequence is uncharacterized protein (421 aa).

Residues 14–72 enclose the TRAM domain; sequence DLTKGDTITVEVTRPAHGGEGIAHHGGRVIFVRGGFPGDDVDVEITQVKKRFARGFVVQ. 4 residues coordinate S-adenosyl-L-methionine: Q250, Y286, E308, and D349. The active-site Nucleophile is the C376.

The protein belongs to the class I-like SAM-binding methyltransferase superfamily. RNA M5U methyltransferase family.

This is an uncharacterized protein from Corynebacterium efficiens (strain DSM 44549 / YS-314 / AJ 12310 / JCM 11189 / NBRC 100395).